Reading from the N-terminus, the 296-residue chain is Magnetosome protein MamB (296 aa).

Over 1-12 (MKFENCRDCREE) the chain is Cytoplasmic. Positions 1–214 (MKFENCRDCR…GLMDSSVDTE (214 aa)) are transmembrane domain (TMD). Residues 13–33 (VVWWAFTADICMTLFKGVLGL) traverse the membrane as a helical segment. At 34–83 (MSGSVALVADSLHSGADVVASGVTQLSLKISNKPADERYPFGYGNIQYIS) the chain is on the lumenal side. A helical transmembrane segment spans residues 84–104 (SSIVGSLLLIGASFLMYGSVM). Residues 105–112 (KLISGTYE) lie on the Cytoplasmic side of the membrane. The helical transmembrane segment at 113-133 (APSIFAAVGASVTVIVNELMY) threads the bilayer. The Lumenal segment spans residues 134 to 164 (RYQICVGNENNSPAIIANAWDNRSDAISSAA). A helical membrane pass occupies residues 165-185 (VMVGVIASVIGFPIADTIAAI). Topologically, residues 186-296 (GVSALVGRIG…SPAPAAAARA (111 aa)) are cytoplasmic. The tract at residues 215 to 296 (LLQTAWQVAM…SPAPAAAARA (82 aa)) is C-terminal domain (CTD).

It belongs to the cation diffusion facilitator (CDF) transporter (TC 2.A.4) family. As to quaternary structure, forms heterodimers with MamM. Probably interacts with MamE.

It is found in the magnetosome membrane. In terms of biological role, plays a dual, essential role in magnetosome formation; required for magnetosome vesicle formation as well as biomineralization. Probably binds and transports iron. Requires heterodimerization with MamM for stability. This Paramagnetospirillum magneticum (strain ATCC 700264 / AMB-1) (Magnetospirillum magneticum) protein is Magnetosome protein MamB (mamB).